Here is a 91-residue protein sequence, read N- to C-terminus: Protein translocase subunit SecG (91 aa).

The next 2 helical transmembrane spans lie at 16–36 (HTFLIVLLIIDCIALITVVLL) and 71–91 (LTIILSILFFVLMICISYLGM).

The protein belongs to the SecG family. Component of the Sec protein translocase complex. Heterotrimer consisting of SecY, SecE and SecG subunits. The heterotrimers can form oligomers, although 1 heterotrimer is thought to be able to translocate proteins. Interacts with SecDF, and other proteins may be involved. The channel interacts with SecA via subunit SecY. Also part of the accessory SecA2/SecY2 protein translocation apparatus required to export cell wall protein GspB.

It localises to the cell membrane. Its function is as follows. Subunit of the protein translocation channel SecYEG. While not essential, it considerably increases the export efficiency of extracellular proteins. The polypeptide is Protein translocase subunit SecG (Staphylococcus aureus (strain NCTC 8325 / PS 47)).